We begin with the raw amino-acid sequence, 267 residues long: Acyl-[acyl-carrier-protein]--UDP-N-acetylglucosamine O-acyltransferase (267 aa).

The protein belongs to the transferase hexapeptide repeat family. LpxA subfamily. As to quaternary structure, homotrimer.

The protein localises to the cytoplasm. It carries out the reaction a (3R)-hydroxyacyl-[ACP] + UDP-N-acetyl-alpha-D-glucosamine = a UDP-3-O-[(3R)-3-hydroxyacyl]-N-acetyl-alpha-D-glucosamine + holo-[ACP]. It functions in the pathway glycolipid biosynthesis; lipid IV(A) biosynthesis; lipid IV(A) from (3R)-3-hydroxytetradecanoyl-[acyl-carrier-protein] and UDP-N-acetyl-alpha-D-glucosamine: step 1/6. Functionally, involved in the biosynthesis of lipid A, a phosphorylated glycolipid that anchors the lipopolysaccharide to the outer membrane of the cell. This chain is Acyl-[acyl-carrier-protein]--UDP-N-acetylglucosamine O-acyltransferase, found in Proteus mirabilis (strain HI4320).